The primary structure comprises 106 residues: Large ribosomal subunit protein uL24 (106 aa).

This sequence belongs to the universal ribosomal protein uL24 family. In terms of assembly, part of the 50S ribosomal subunit.

One of two assembly initiator proteins, it binds directly to the 5'-end of the 23S rRNA, where it nucleates assembly of the 50S subunit. Its function is as follows. One of the proteins that surrounds the polypeptide exit tunnel on the outside of the subunit. This Alkalilimnicola ehrlichii (strain ATCC BAA-1101 / DSM 17681 / MLHE-1) protein is Large ribosomal subunit protein uL24.